Here is a 256-residue protein sequence, read N- to C-terminus: Triosephosphate isomerase (256 aa).

Substrate is bound at residue 12 to 14 (NWK). The active-site Electrophile is H99. The active-site Proton acceptor is the E169. Substrate is bound by residues G175, S214, and 235-236 (GG).

The protein belongs to the triosephosphate isomerase family. In terms of assembly, homodimer.

The protein localises to the cytoplasm. It carries out the reaction D-glyceraldehyde 3-phosphate = dihydroxyacetone phosphate. It participates in carbohydrate biosynthesis; gluconeogenesis. It functions in the pathway carbohydrate degradation; glycolysis; D-glyceraldehyde 3-phosphate from glycerone phosphate: step 1/1. Involved in the gluconeogenesis. Catalyzes stereospecifically the conversion of dihydroxyacetone phosphate (DHAP) to D-glyceraldehyde-3-phosphate (G3P). In Rhizobium meliloti (strain 1021) (Ensifer meliloti), this protein is Triosephosphate isomerase.